Reading from the N-terminus, the 343-residue chain is MQMRDAIGAVMRHRHLSFDDTHAVMRAIMTGEASDAQIGGFLIGLAMKGETAEEITAAAQVMRELMTPVEVDRSHLVDIVGTGGDGANLFNVSTASSFVVAAAGGRVAKHGNRSVSSSSGSADLFDVAGISLELPPVEVARCITEIGVGFMFAPMHHQAMRHAIGPRREMGVRTVFNILGPLTNPAGAPNQLLGVYDPALLTIMAEALRRLGSEHVLVVNAEDGLDEISLAAPTRVAELRDGEIHEYTIAPEDFGIERQALAPLKVVTAEDSLKLVKAALVGEGPAADIVALNAGAALYAAGVADTLSEGVVLAQDSQASKLPLEKMKELADFTRILAHKDER.

Residues G81, 84 to 85 (GD), 91 to 94 (NVST), 109 to 117 (KHGNRSVSS), and S121 contribute to the 5-phospho-alpha-D-ribose 1-diphosphate site. G81 provides a ligand contact to anthranilate. S93 is a Mg(2+) binding site. Residue N112 participates in anthranilate binding. R167 is an anthranilate binding site. Mg(2+) is bound by residues D226 and E227.

The protein belongs to the anthranilate phosphoribosyltransferase family. Homodimer. Mg(2+) serves as cofactor.

It catalyses the reaction N-(5-phospho-beta-D-ribosyl)anthranilate + diphosphate = 5-phospho-alpha-D-ribose 1-diphosphate + anthranilate. Its pathway is amino-acid biosynthesis; L-tryptophan biosynthesis; L-tryptophan from chorismate: step 2/5. Functionally, catalyzes the transfer of the phosphoribosyl group of 5-phosphorylribose-1-pyrophosphate (PRPP) to anthranilate to yield N-(5'-phosphoribosyl)-anthranilate (PRA). The polypeptide is Anthranilate phosphoribosyltransferase (Chromohalobacter salexigens (strain ATCC BAA-138 / DSM 3043 / CIP 106854 / NCIMB 13768 / 1H11)).